The chain runs to 271 residues: Thiazole synthase (271 aa).

Catalysis depends on Lys-95, which acts as the Schiff-base intermediate with DXP. 1-deoxy-D-xylulose 5-phosphate is bound by residues Gly-156, Ala-182–Gly-183, and Asn-204–Thr-205.

The protein belongs to the ThiG family. As to quaternary structure, homotetramer. Forms heterodimers with either ThiH or ThiS.

Its subcellular location is the cytoplasm. The catalysed reaction is [ThiS sulfur-carrier protein]-C-terminal-Gly-aminoethanethioate + 2-iminoacetate + 1-deoxy-D-xylulose 5-phosphate = [ThiS sulfur-carrier protein]-C-terminal Gly-Gly + 2-[(2R,5Z)-2-carboxy-4-methylthiazol-5(2H)-ylidene]ethyl phosphate + 2 H2O + H(+). It participates in cofactor biosynthesis; thiamine diphosphate biosynthesis. Functionally, catalyzes the rearrangement of 1-deoxy-D-xylulose 5-phosphate (DXP) to produce the thiazole phosphate moiety of thiamine. Sulfur is provided by the thiocarboxylate moiety of the carrier protein ThiS. In vitro, sulfur can be provided by H(2)S. The chain is Thiazole synthase from Shewanella amazonensis (strain ATCC BAA-1098 / SB2B).